We begin with the raw amino-acid sequence, 155 residues long: Transcription antitermination protein NusB (155 aa).

The protein belongs to the NusB family.

Its function is as follows. Involved in transcription antitermination. Required for transcription of ribosomal RNA (rRNA) genes. Binds specifically to the boxA antiterminator sequence of the ribosomal RNA (rrn) operons. This chain is Transcription antitermination protein NusB, found in Vibrio campbellii (strain ATCC BAA-1116).